Consider the following 227-residue polypeptide: Cytochrome c oxidase subunit 2 (227 aa).

Topologically, residues 1–14 are mitochondrial intermembrane; the sequence is MAYPFQLGLQDATS. A helical membrane pass occupies residues 15–45; it reads PIMEELLHFHDHTLMIVFLISSLVLYIISLM. Topologically, residues 46–59 are mitochondrial matrix; the sequence is LTTKLTHTSTMDAQ. The helical transmembrane segment at 60–87 threads the bilayer; sequence EVETVWTILPAIILILIALPSLRILYMM. The Mitochondrial intermembrane portion of the chain corresponds to 88-227; the sequence is DEINNPSLTV…YFETWSALMV (140 aa). Cu cation is bound by residues H161, C196, E198, C200, H204, and M207. Position 198 (E198) interacts with Mg(2+). A Phosphotyrosine modification is found at Y218.

This sequence belongs to the cytochrome c oxidase subunit 2 family. As to quaternary structure, component of the cytochrome c oxidase (complex IV, CIV), a multisubunit enzyme composed of 14 subunits. The complex is composed of a catalytic core of 3 subunits MT-CO1, MT-CO2 and MT-CO3, encoded in the mitochondrial DNA, and 11 supernumerary subunits COX4I, COX5A, COX5B, COX6A, COX6B, COX6C, COX7A, COX7B, COX7C, COX8 and NDUFA4, which are encoded in the nuclear genome. The complex exists as a monomer or a dimer and forms supercomplexes (SCs) in the inner mitochondrial membrane with NADH-ubiquinone oxidoreductase (complex I, CI) and ubiquinol-cytochrome c oxidoreductase (cytochrome b-c1 complex, complex III, CIII), resulting in different assemblies (supercomplex SCI(1)III(2)IV(1) and megacomplex MCI(2)III(2)IV(2)). Found in a complex with TMEM177, COA6, COX18, COX20, SCO1 and SCO2. Interacts with TMEM177 in a COX20-dependent manner. Interacts with COX20. Interacts with COX16. Requires Cu cation as cofactor.

It is found in the mitochondrion inner membrane. It carries out the reaction 4 Fe(II)-[cytochrome c] + O2 + 8 H(+)(in) = 4 Fe(III)-[cytochrome c] + 2 H2O + 4 H(+)(out). Component of the cytochrome c oxidase, the last enzyme in the mitochondrial electron transport chain which drives oxidative phosphorylation. The respiratory chain contains 3 multisubunit complexes succinate dehydrogenase (complex II, CII), ubiquinol-cytochrome c oxidoreductase (cytochrome b-c1 complex, complex III, CIII) and cytochrome c oxidase (complex IV, CIV), that cooperate to transfer electrons derived from NADH and succinate to molecular oxygen, creating an electrochemical gradient over the inner membrane that drives transmembrane transport and the ATP synthase. Cytochrome c oxidase is the component of the respiratory chain that catalyzes the reduction of oxygen to water. Electrons originating from reduced cytochrome c in the intermembrane space (IMS) are transferred via the dinuclear copper A center (CU(A)) of subunit 2 and heme A of subunit 1 to the active site in subunit 1, a binuclear center (BNC) formed by heme A3 and copper B (CU(B)). The BNC reduces molecular oxygen to 2 water molecules using 4 electrons from cytochrome c in the IMS and 4 protons from the mitochondrial matrix. The polypeptide is Cytochrome c oxidase subunit 2 (MT-CO2) (Urocyon cinereoargenteus (Gray fox)).